Reading from the N-terminus, the 193-residue chain is MFNLPNKITLARIALIPIFMIIMLAPFDWGRLEVGDESIPVAHLAGAILFIIASTTDWVDGYYARKLNLVTNFGKFLDPLADKLLVSAALIILVQFDLAPAWMVIVIISREFAVTGLRLVLAGTGEVVAANMLGKIKTWAQIIAVSALLLHNLPFELVSFPFADLALWVAVFFTVVSGWEYFSKNWEALKTSN.

The next 4 helical transmembrane spans lie at 8–28 (ITLA…APFD), 39–59 (IPVA…TDWV), 88–108 (AALI…IVII), and 157–177 (LVSF…TVVS).

It belongs to the CDP-alcohol phosphatidyltransferase class-I family.

Its subcellular location is the cell membrane. It catalyses the reaction a CDP-1,2-diacyl-sn-glycerol + sn-glycerol 3-phosphate = a 1,2-diacyl-sn-glycero-3-phospho-(1'-sn-glycero-3'-phosphate) + CMP + H(+). It participates in phospholipid metabolism; phosphatidylglycerol biosynthesis; phosphatidylglycerol from CDP-diacylglycerol: step 1/2. Functionally, this protein catalyzes the committed step to the synthesis of the acidic phospholipids. The polypeptide is CDP-diacylglycerol--glycerol-3-phosphate 3-phosphatidyltransferase (pgsA) (Bacillus subtilis (strain 168)).